The chain runs to 43 residues: Protein PsbN (43 aa).

The chain crosses the membrane as a helical span at residues 5–27 (TLVTISISCLLVSFTGYALYTAF).

It belongs to the PsbN family.

It is found in the plastid. Its subcellular location is the chloroplast thylakoid membrane. May play a role in photosystem I and II biogenesis. This Pinus koraiensis (Korean pine) protein is Protein PsbN.